A 960-amino-acid chain; its full sequence is Phosphoenolpyruvate carboxylase 3 (960 aa).

Ser-8 bears the Phosphoserine mark. Active-site residues include His-167 and Lys-597.

Belongs to the PEPCase type 1 family. Homotetramer. Mg(2+) serves as cofactor.

Its subcellular location is the cytoplasm. It catalyses the reaction oxaloacetate + phosphate = phosphoenolpyruvate + hydrogencarbonate. Its pathway is photosynthesis; C4 acid pathway. With respect to regulation, by light-reversible phosphorylation. Its function is as follows. Through the carboxylation of phosphoenolpyruvate (PEP) it forms oxaloacetate, a four-carbon dicarboxylic acid source for the tricarboxylic acid cycle. The protein is Phosphoenolpyruvate carboxylase 3 of Sorghum bicolor (Sorghum).